Here is a 231-residue protein sequence, read N- to C-terminus: Extracellular deoxyribonuclease (231 aa).

A signal peptide spans 1–20; the sequence is MMIFRFVTTLAASLPLLTFA.

This sequence belongs to the EndA/NucM nuclease family.

It is found in the secreted. The sequence is that of Extracellular deoxyribonuclease (dns) from Vibrio cholerae serotype O1 (strain ATCC 39315 / El Tor Inaba N16961).